The following is a 423-amino-acid chain: Transcription factor IIIB 50 kDa subunit (423 aa).

A TFIIB-type zinc finger spans residues 1–34 (MSKNCPECGSSRVVEDDLYSQKQWVCEDCGSVVS). Cys-5, Cys-8, Cys-26, and Cys-29 together coordinate Zn(2+). Residues 171 to 245 (LESFCYDFKL…LARMKYSLMK (75 aa)) form repeat 2. Over residues 325–340 (QTSQYSESELSDSKSS) the composition is skewed to low complexity. The disordered stretch occupies residues 325–358 (QTSQYSESELSDSKSSVQTQCKSPPDEEDEGCEL). Residue Cys-373 is modified to Cysteine sulfenic acid (-SOH).

It belongs to the TFIIB family. Component of TFIIIB complexes. Interacts with TBP and forms a ternary complex with TBp and target DNA sequences. In response to oxidative stress, a Cys-residue is reversibly oxidized to cysteine sulfenic acid. This impairs formation of a ternary complex with TBP and DNA and down-regulates expression of target genes in response to oxidative stress.

Its subcellular location is the nucleus. Its function is as follows. General activator of RNA polymerase III transcription. Factor exclusively required for RNA polymerase III transcription of genes with promoter elements upstream of the initiation sites. Contributes to the regulation of gene expression; functions as activator in the absence of oxidative stress. Down-regulates expression of target genes in response to oxidative stress. Overexpression protects cells against apoptosis in response to oxidative stress. In Danio rerio (Zebrafish), this protein is Transcription factor IIIB 50 kDa subunit (brf2).